The primary structure comprises 161 residues: Transcription elongation factor GreB (161 aa).

Belongs to the GreA/GreB family. GreB subfamily.

Its function is as follows. Necessary for efficient RNA polymerase transcription elongation past template-encoded arresting sites. The arresting sites in DNA have the property of trapping a certain fraction of elongating RNA polymerases that pass through, resulting in locked ternary complexes. Cleavage of the nascent transcript by cleavage factors such as GreA or GreB allows the resumption of elongation from the new 3'terminus. GreB releases sequences of up to 9 nucleotides in length. In Vibrio cholerae serotype O1 (strain ATCC 39315 / El Tor Inaba N16961), this protein is Transcription elongation factor GreB.